Here is a 234-residue protein sequence, read N- to C-terminus: Large ribosomal subunit protein uL1 (234 aa).

This sequence belongs to the universal ribosomal protein uL1 family. In terms of assembly, part of the 50S ribosomal subunit.

Its function is as follows. Binds directly to 23S rRNA. The L1 stalk is quite mobile in the ribosome, and is involved in E site tRNA release. Protein L1 is also a translational repressor protein, it controls the translation of the L11 operon by binding to its mRNA. The sequence is that of Large ribosomal subunit protein uL1 from Anaeromyxobacter dehalogenans (strain 2CP-C).